A 269-amino-acid chain; its full sequence is Microtubule-associated protein RP/EB family member 1 (269 aa).

One can recognise a Calponin-homology (CH) domain in the interval 14–116 (NLSRHDMLAW…FVQWFKKFFD (103 aa)). Positions 168–190 (RTAVSNKPPAQGISKKPATVGNG) are disordered. Positions 186–256 (TVGNGDDESA…LYATDEGFVI (71 aa)) constitute an EB1 C-terminal domain.

It belongs to the MAPRE family.

It is found in the cytoplasm. The protein localises to the cytoskeleton. Its subcellular location is the microtubule organizing center. The protein resides in the centrosome. It localises to the golgi apparatus. It is found in the spindle. The protein localises to the spindle pole. Its function is as follows. Plus-end tracking protein (+TIP) that binds to the plus-end of microtubules and regulates the dynamics of the microtubule cytoskeleton. Promotes cytoplasmic microtubule nucleation and elongation. Involved in mitotic spindle positioning by stabilizing microtubules and promoting dynamic connection between astral microtubules and the cortex during mitotic chromosome segregation. This is Microtubule-associated protein RP/EB family member 1 (mapre1) from Xenopus tropicalis (Western clawed frog).